Consider the following 775-residue polypeptide: Dipeptidyl peptidase 4 (775 aa).

The signal sequence occupies residues 1 to 15 (MKFLSLLLLVGVAQA). 3 N-linked (GlcNAc...) asparagine glycosylation sites follow: asparagine 81, asparagine 111, and asparagine 219. Active-site charge relay system residues include serine 613, aspartate 690, and histidine 725. N-linked (GlcNAc...) asparagine glycosylation is present at asparagine 731.

The protein belongs to the peptidase S9B family.

Its subcellular location is the secreted. It catalyses the reaction Release of an N-terminal dipeptide, Xaa-Yaa-|-Zaa-, from a polypeptide, preferentially when Yaa is Pro, provided Zaa is neither Pro nor hydroxyproline.. Extracellular dipeptidyl-peptidase which removes N-terminal dipeptides sequentially from polypeptides having unsubstituted N-termini provided that the penultimate residue is proline. Contributes to pathogenicity. This chain is Dipeptidyl peptidase 4 (DPP4), found in Arthroderma otae (strain ATCC MYA-4605 / CBS 113480) (Microsporum canis).